The primary structure comprises 130 residues: Ribonuclease P protein component (130 aa).

Belongs to the RnpA family. In terms of assembly, consists of a catalytic RNA component (M1 or rnpB) and a protein subunit.

The catalysed reaction is Endonucleolytic cleavage of RNA, removing 5'-extranucleotides from tRNA precursor.. RNaseP catalyzes the removal of the 5'-leader sequence from pre-tRNA to produce the mature 5'-terminus. It can also cleave other RNA substrates such as 4.5S RNA. The protein component plays an auxiliary but essential role in vivo by binding to the 5'-leader sequence and broadening the substrate specificity of the ribozyme. This is Ribonuclease P protein component from Azotobacter vinelandii (strain DJ / ATCC BAA-1303).